The primary structure comprises 151 residues: ALK and LTK ligand 2 (151 aa).

An N-terminal signal peptide occupies residues 1-25 (MRVSGRPMLLALLLLLSTVGDRGRA). Intrachain disulfides connect Cys112-Cys148 and Cys126-Cys135.

The protein belongs to the ALKAL family. Homodimer.

It localises to the secreted. It is found in the cell membrane. Cytokine that acts as a physiological ligand for receptor tyrosine kinases LTK and ALK, leading to their activation. Cytokine-binding is sufficient to activate LTK. In contrast, ALKAL2-driven activation of ALK is coupled with heparin-binding to ALK. Stimulation of ALK signaling is involved in neural development and regulation of energy expenditure. The protein is ALK and LTK ligand 2 of Mus musculus (Mouse).